Here is a 475-residue protein sequence, read N- to C-terminus: MNLFFEKTGATNVAEFSVSEIAGALKRVVEEKFGYVRVRGEISGYRGAHASGHAYFALKDDKARLEAVIWRGIMEKLKFPPEEGMEVIAVGKLTTYPGSSKYQIVIEALEPTGVGALMTLLENRKKKFAEEGLFDEEKKKPLPYMPKIIGVVTSPTGAVIRDIIHRISDRFPLHILVWPVRVQGETSGREVAAAVKGFNVLPLEGLIPKPDLLIVARGGGSLEDLWGFNDEVVVRAVYESSLPVISAVGHETDWTLIDYVADWRAPTPTAAAEKAVPVKIDLEVYVVSLGARLRTGLARYFDFHQQKLRAIIRALPTADQLFALPRRGFDEISSRLERALCVSCDKKRLYFHTLAIRFTPRLLNTEKAQHSAKEYTARLHRAFVHIVEKQRAQLEIAFRLLKSTSYQNILERGFVLALGQNNKPIKRLAQIPEKEQINLRFFDGEISVITQESFFNRSSKSKRIKSKQDDQGTLF.

This sequence belongs to the XseA family. Heterooligomer composed of large and small subunits.

It is found in the cytoplasm. It catalyses the reaction Exonucleolytic cleavage in either 5'- to 3'- or 3'- to 5'-direction to yield nucleoside 5'-phosphates.. Its function is as follows. Bidirectionally degrades single-stranded DNA into large acid-insoluble oligonucleotides, which are then degraded further into small acid-soluble oligonucleotides. This chain is Exodeoxyribonuclease 7 large subunit, found in Bartonella henselae (strain ATCC 49882 / DSM 28221 / CCUG 30454 / Houston 1) (Rochalimaea henselae).